The primary structure comprises 255 residues: Ribosomal RNA small subunit methyltransferase J (255 aa).

S-adenosyl-L-methionine is bound by residues 107–108 (RD), 123–124 (ER), and D178. A disordered region spans residues 228–247 (ARAEPLSGRKPSHQIPGKTT).

It belongs to the methyltransferase superfamily. RsmJ family.

The protein localises to the cytoplasm. It carries out the reaction guanosine(1516) in 16S rRNA + S-adenosyl-L-methionine = N(2)-methylguanosine(1516) in 16S rRNA + S-adenosyl-L-homocysteine + H(+). In terms of biological role, specifically methylates the guanosine in position 1516 of 16S rRNA. The sequence is that of Ribosomal RNA small subunit methyltransferase J from Thioalkalivibrio sulfidiphilus (strain HL-EbGR7).